The primary structure comprises 131 residues: MIMPLINGLKITLKHMFMKPVTLQYPDERPTPSPNFRGLHALKVSHSKAKCVCCYLCPTVCPAKCITVEAGEDQEHNKYAERYEIDMLRCIFCGYCVEACPVDALKMTGEFELANYKREDFVFVKERLLEK.

4Fe-4S ferredoxin-type domains lie at 42–71 (LKVSHSKAKCVCCYLCPTVCPAKCITVEAG) and 81–110 (ERYEIDMLRCIFCGYCVEACPVDALKMTGE). Positions 51, 54, 57, 61, 90, 93, 96, and 100 each coordinate [4Fe-4S] cluster.

The protein belongs to the complex I 23 kDa subunit family. In terms of assembly, NDH-1 is composed of 14 different subunits. Subunits NuoA, H, J, K, L, M, N constitute the membrane sector of the complex. It depends on [4Fe-4S] cluster as a cofactor.

The protein localises to the cell inner membrane. The enzyme catalyses a quinone + NADH + 5 H(+)(in) = a quinol + NAD(+) + 4 H(+)(out). Its function is as follows. NDH-1 shuttles electrons from NADH, via FMN and iron-sulfur (Fe-S) centers, to quinones in the respiratory chain. The immediate electron acceptor for the enzyme in this species is believed to be ubiquinone. Couples the redox reaction to proton translocation (for every two electrons transferred, four hydrogen ions are translocated across the cytoplasmic membrane), and thus conserves the redox energy in a proton gradient. This Geobacter metallireducens (strain ATCC 53774 / DSM 7210 / GS-15) protein is NADH-quinone oxidoreductase subunit I 2.